Consider the following 1077-residue polypeptide: Ubiquitin carboxyl-terminal hydrolase 28 (1077 aa).

Residues 60-80 are disordered; the sequence is DERVKEPSQDTVATEPSEVEG. Position 67 is a phosphoserine (serine 67). The 20-residue stretch at 97–116 folds into the UIM domain; it reads DNKDDLQAAIALSLLESPKI. Lysine 99 is covalently cross-linked (Glycyl lysine isopeptide (Lys-Gly) (interchain with G-Cter in SUMO2)). The USP domain occupies 162-650; it reads VGLKNVGNTC…SAYCLMYIND (489 aa). Cysteine 171 serves as the catalytic Nucleophile. Serine 375 is subject to Phosphoserine. The disordered stretch occupies residues 477–535; the sequence is HCSVSDQTSKESTSTESSSQDVESTFSSPEDSLPKSKPLTSSRSSMEMPSQPAPRTVTD. Positions 481 to 501 are enriched in low complexity; sequence SDQTSKESTSTESSSQDVEST. Residues 514 to 524 are compositionally biased toward polar residues; that stretch reads PLTSSRSSMEM. Serine 550 carries the phosphoserine modification. Histidine 600 acts as the Proton acceptor in catalysis. Residues 697-728 form a disordered region; sequence EEQSCKIPQMESSTNSSSQDYSTSQEPSVASS. A compositionally biased stretch (low complexity) spans 707-724; sequence ESSTNSSSQDYSTSQEPS. Serine 714 is subject to Phosphoserine. Residue lysine 759 forms a Glycyl lysine isopeptide (Lys-Gly) (interchain with G-Cter in SUMO2) linkage. Threonine 1048 bears the Phosphothreonine mark.

Belongs to the peptidase C19 family. USP28 subfamily. As to quaternary structure, interacts with ZNF304. Interacts with PRKD1. Interacts with TP53BP1. Interacts with isoform 1 of FBXW7; following DNA damage, dissociates from FBXW7 leading to degradation of MYC. Post-translationally, degraded upon nickel ion level or hypoxia exposure. In terms of processing, phosphorylated upon DNA damage at Ser-67 and Ser-714, by ATM or ATR. Phosphorylated by PRKD1.

Its subcellular location is the nucleus. The protein resides in the nucleoplasm. The enzyme catalyses Thiol-dependent hydrolysis of ester, thioester, amide, peptide and isopeptide bonds formed by the C-terminal Gly of ubiquitin (a 76-residue protein attached to proteins as an intracellular targeting signal).. Functionally, deubiquitinase involved in DNA damage response checkpoint and MYC proto-oncogene stability. Involved in DNA damage induced apoptosis by specifically deubiquitinating proteins of the DNA damage pathway such as CLSPN. Also involved in G2 DNA damage checkpoint, by deubiquitinating CLSPN, and preventing its degradation by the anaphase promoting complex/cyclosome (APC/C). In contrast, it does not deubiquitinate PLK1. Specifically deubiquitinates MYC in the nucleoplasm, leading to prevent MYC degradation by the proteasome: acts by specifically interacting with isoform 1 of FBXW7 (FBW7alpha) in the nucleoplasm and counteracting ubiquitination of MYC by the SCF(FBW7) complex. In contrast, it does not interact with isoform 4 of FBXW7 (FBW7gamma) in the nucleolus, allowing MYC degradation and explaining the selective MYC degradation in the nucleolus. Deubiquitinates ZNF304, hence preventing ZNF304 degradation by the proteasome and leading to the activated KRAS-mediated promoter hypermethylation and transcriptional silencing of tumor suppressor genes (TSGs) in a subset of colorectal cancers (CRC) cells. The chain is Ubiquitin carboxyl-terminal hydrolase 28 (USP28) from Homo sapiens (Human).